A 350-amino-acid polypeptide reads, in one-letter code: 4-hydroxy-2-oxovalerate aldolase 2 (350 aa).

The region spanning 8–260 (ITVHDMTLRD…ETGVDVFKIQ (253 aa)) is the Pyruvate carboxyltransferase domain. Residue 16–17 (RD) coordinates substrate. Aspartate 17 is a binding site for Mn(2+). Catalysis depends on histidine 20, which acts as the Proton acceptor. 2 residues coordinate substrate: serine 170 and histidine 199. Mn(2+) contacts are provided by histidine 199 and histidine 201. Tyrosine 290 contributes to the substrate binding site.

The protein belongs to the 4-hydroxy-2-oxovalerate aldolase family.

It catalyses the reaction (S)-4-hydroxy-2-oxopentanoate = acetaldehyde + pyruvate. The polypeptide is 4-hydroxy-2-oxovalerate aldolase 2 (tesG) (Comamonas testosteroni (Pseudomonas testosteroni)).